The sequence spans 533 residues: NEDD8-activating enzyme E1 regulatory subunit (533 aa).

Residues 330–343 form an interaction with uba3 region; it reads DMIADSDKFIKLQN.

The protein belongs to the ubiquitin-activating E1 family. ULA1 subfamily. As to quaternary structure, heterodimer of uba3 and nae1. The complex binds nedd8 and ube2m.

Its pathway is protein modification; protein neddylation. Its function is as follows. Regulatory subunit of the dimeric uba3-nae1 E1 enzyme. E1 activates nedd8 by first adenylating its C-terminal glycine residue with ATP, thereafter linking this residue to the side chain of the catalytic cysteine, yielding a nedd8-uba3 thioester and free AMP. E1 finally transfers nedd8 to the catalytic cysteine of ube2m. The covalent attachment of nedd8 to target proteins is known as 'neddylation' and the process is involved in the regulation of cell growth, viability and development. The sequence is that of NEDD8-activating enzyme E1 regulatory subunit (nae1) from Xenopus laevis (African clawed frog).